The chain runs to 384 residues: 2-isopropylmalate synthase 2 (384 aa).

Positions 9–260 constitute a Pyruvate carboxyltransferase domain; it reads VYIVDTTLRD…DLGIDTSRFR (252 aa). Mn(2+) contacts are provided by aspartate 18, histidine 198, histidine 200, and asparagine 234.

The protein belongs to the alpha-IPM synthase/homocitrate synthase family. LeuA type 1 subfamily. Homodimer. Mn(2+) serves as cofactor.

It localises to the cytoplasm. The enzyme catalyses 3-methyl-2-oxobutanoate + acetyl-CoA + H2O = (2S)-2-isopropylmalate + CoA + H(+). Its pathway is amino-acid biosynthesis; L-leucine biosynthesis; L-leucine from 3-methyl-2-oxobutanoate: step 1/4. In terms of biological role, catalyzes the condensation of the acetyl group of acetyl-CoA with 3-methyl-2-oxobutanoate (2-ketoisovalerate) to form 3-carboxy-3-hydroxy-4-methylpentanoate (2-isopropylmalate). The sequence is that of 2-isopropylmalate synthase 2 from Caldanaerobacter subterraneus subsp. tengcongensis (strain DSM 15242 / JCM 11007 / NBRC 100824 / MB4) (Thermoanaerobacter tengcongensis).